Reading from the N-terminus, the 254-residue chain is Sec-independent protein translocase protein TatCy (254 aa).

6 helical membrane passes run 24 to 44, 67 to 87, 112 to 132, 157 to 177, 187 to 207, and 212 to 232; these read IVALAFVVFFIAGFFLAKPII, LYVFMQFAFIIGIVLTSPVIL, VSILLFLAGLSFSYYILFPFV, FLLQLTIPFGLLFQMPVILMF, MFLAKIRKYAYFTLLVIAALI, and LLSHMMVTVPLLILYEISILI.

Belongs to the TatC family. In terms of assembly, forms a complex with TatAy. Two types of complexes exist: one composed of TatAy and TatCy, and another composed only of TatAy.

The protein localises to the cell membrane. Its function is as follows. Part of the twin-arginine translocation (Tat) system that transports large folded proteins containing a characteristic twin-arginine motif in their signal peptide across membranes. Required for YwbN secretion. The protein is Sec-independent protein translocase protein TatCy of Bacillus subtilis (strain 168).